A 515-amino-acid chain; its full sequence is Bifunctional purine biosynthesis protein PurH (515 aa).

An MGS-like domain is found at 1–145; that stretch reads MTKRVLISVS…KNHASVTVVV (145 aa).

The protein belongs to the PurH family.

The catalysed reaction is (6R)-10-formyltetrahydrofolate + 5-amino-1-(5-phospho-beta-D-ribosyl)imidazole-4-carboxamide = 5-formamido-1-(5-phospho-D-ribosyl)imidazole-4-carboxamide + (6S)-5,6,7,8-tetrahydrofolate. The enzyme catalyses IMP + H2O = 5-formamido-1-(5-phospho-D-ribosyl)imidazole-4-carboxamide. It functions in the pathway purine metabolism; IMP biosynthesis via de novo pathway; 5-formamido-1-(5-phospho-D-ribosyl)imidazole-4-carboxamide from 5-amino-1-(5-phospho-D-ribosyl)imidazole-4-carboxamide (10-formyl THF route): step 1/1. The protein operates within purine metabolism; IMP biosynthesis via de novo pathway; IMP from 5-formamido-1-(5-phospho-D-ribosyl)imidazole-4-carboxamide: step 1/1. The protein is Bifunctional purine biosynthesis protein PurH of Streptococcus pneumoniae (strain Taiwan19F-14).